We begin with the raw amino-acid sequence, 711 residues long: MTKNESYSGIDYFRFIAALLIVAIHTSPLFSFSETGNFIFTRIVAPVAVPFFFMTSGFFLISRYTCNAEKLGAFIKKTTLIYGVAILLYIPINVYNGYFKMDNLLPNIIKDIVFDGTLYHLWYLPASIIGAAIAWYLVKKVHYRKAFLIASILYIIGLFGDSYYGIVKSVSCLNVFYNLIFQLTDYTRNGIFFAPIFFVLGGYISDSPNRYRKKNYIRIYSLFCLMFGKTLTLQHFDIQKHDSMYVLLLPSVWCLFNLLLHFRGKRRTGLRTISLDQLYHSSVYDCCNTIVCAELLHLQSLLVENSLVHYIAVCFASVVLAVVITALLSSLKPKKAKHTADTDRAYLEINLNNLEHNVNTLQKAMSPKCELMAVVKAEAYGHGMYEVTTYFEPIGVFYLAVATIDEGIRLRKYGIFSEILILGYTSPSRAKELCKFELTQTLIDYRYLLLLNKQGYDIKAHIKIDTGMHRLGFSTEDKDKILAAFFLKHIKVAGIFTHLCAADSLEEKEVAFTNKPIGSFYKVLDWPKSSGLNIPKVNIQTSYGLWNIQSWNVIYQSGVALYGVLRSTNDKTKLETDLRACSFLKAKVVLIRKIKQGGSVGYSRAFTATRDSLIAILPIGYADGFPRNLSCGNSYVLIGGRQAPIVGKICMDQLAVDVTDIPNVKTGSIATLIGKDGKEEITAPMVAESAESITNELLSRMEHRLNIIRRA.

Residues 1-14 (MTKNESYSGIDYFR) lie on the Cytoplasmic side of the membrane. Residues 15 to 35 (FIAALLIVAIHTSPLFSFSET) traverse the membrane as a helical segment. Over 36 to 37 (GN) the chain is Extracellular. A helical membrane pass occupies residues 38 to 58 (FIFTRIVAPVAVPFFFMTSGF). The Cytoplasmic segment spans residues 59 to 78 (FLISRYTCNAEKLGAFIKKT). The chain crosses the membrane as a helical span at residues 79–99 (TLIYGVAILLYIPINVYNGYF). Over 100–117 (KMDNLLPNIIKDIVFDGT) the chain is Extracellular. A helical membrane pass occupies residues 118 to 138 (LYHLWYLPASIIGAAIAWYLV). Over 139–146 (KKVHYRKA) the chain is Cytoplasmic. Residues 147–167 (FLIASILYIIGLFGDSYYGIV) form a helical membrane-spanning segment. The Extracellular portion of the chain corresponds to 168–188 (KSVSCLNVFYNLIFQLTDYTR). Residues 189–209 (NGIFFAPIFFVLGGYISDSPN) form a helical membrane-spanning segment. The Cytoplasmic segment spans residues 210 to 241 (RYRKKNYIRIYSLFCLMFGKTLTLQHFDIQKH). The helical transmembrane segment at 242–262 (DSMYVLLLPSVWCLFNLLLHF) threads the bilayer. Residues 263 to 306 (RGKRRTGLRTISLDQLYHSSVYDCCNTIVCAELLHLQSLLVENS) are Extracellular-facing. A helical transmembrane segment spans residues 307–327 (LVHYIAVCFASVVLAVVITAL). Residues 328–711 (LSSLKPKKAK…EHRLNIIRRA (384 aa)) lie on the Cytoplasmic side of the membrane. Residues 336–711 (AKHTADTDRA…EHRLNIIRRA (376 aa)) form a racemase region. K376 serves as the catalytic Proton acceptor. N6-(pyridoxal phosphate)lysine is present on K376. R470 lines the substrate pocket. Y602 acts as the Proton acceptor in catalysis. M651 is a binding site for substrate.

In the N-terminal section; belongs to the acyltransferase 3 family. The protein in the C-terminal section; belongs to the alanine racemase family. It depends on pyridoxal 5'-phosphate as a cofactor.

The protein localises to the cell membrane. The sequence is that of Amino-acid racemase (vanTG) from Enterococcus faecalis (Streptococcus faecalis).